Here is a 128-residue protein sequence, read N- to C-terminus: Probable 4-amino-4-deoxy-L-arabinose-phosphoundecaprenol flippase subunit ArnF (128 aa).

Residues 1-21 form a helical membrane-spanning segment; the sequence is MGLMWGLFSVIIASAAQLSLG. The Periplasmic portion of the chain corresponds to 22-35; the sequence is YAASHLPPMTQFWD. The helical transmembrane segment at 36–56 threads the bilayer; it reads FIAAFFAFGPGARMLVVGLVG. Residues 57–76 are Cytoplasmic-facing; sequence YLLSVFCWYKALHQLALSKA. Residues 77-97 form a helical membrane-spanning segment; it reads YALLSMSYVLVWIASMVLPGW. Over 98–100 the chain is Periplasmic; sequence EGT. A helical transmembrane segment spans residues 101-121; it reads FSLKALLGVACIMSGLMLIFL. The Cytoplasmic portion of the chain corresponds to 122 to 128; that stretch reads PTTKQRY.

It belongs to the ArnF family. Heterodimer of ArnE and ArnF.

It is found in the cell inner membrane. Its pathway is bacterial outer membrane biogenesis; lipopolysaccharide biosynthesis. Translocates 4-amino-4-deoxy-L-arabinose-phosphoundecaprenol (alpha-L-Ara4N-phosphoundecaprenol) from the cytoplasmic to the periplasmic side of the inner membrane. In Escherichia fergusonii (strain ATCC 35469 / DSM 13698 / CCUG 18766 / IAM 14443 / JCM 21226 / LMG 7866 / NBRC 102419 / NCTC 12128 / CDC 0568-73), this protein is Probable 4-amino-4-deoxy-L-arabinose-phosphoundecaprenol flippase subunit ArnF.